A 342-amino-acid polypeptide reads, in one-letter code: Dihydroorotate dehydrogenase (quinone) (342 aa).

FMN contacts are provided by residues 61–65 (AGLDK) and T85. A substrate-binding site is contributed by K65. 110–114 (NRMGF) contacts substrate. FMN-binding residues include N138 and N171. N171 is a binding site for substrate. S174 serves as the catalytic Nucleophile. N176 is a binding site for substrate. FMN is bound by residues K216 and T244. Residue 245–246 (NT) participates in substrate binding. Residues G267, G296, and 317-318 (YS) each bind FMN.

This sequence belongs to the dihydroorotate dehydrogenase family. Type 2 subfamily. As to quaternary structure, monomer. FMN serves as cofactor.

Its subcellular location is the cell membrane. The catalysed reaction is (S)-dihydroorotate + a quinone = orotate + a quinol. The protein operates within pyrimidine metabolism; UMP biosynthesis via de novo pathway; orotate from (S)-dihydroorotate (quinone route): step 1/1. Functionally, catalyzes the conversion of dihydroorotate to orotate with quinone as electron acceptor. This chain is Dihydroorotate dehydrogenase (quinone), found in Pseudomonas aeruginosa (strain LESB58).